Consider the following 352-residue polypeptide: Glycerol-1-phosphate dehydrogenase [NAD(P)+] (352 aa).

NAD(+) is bound by residues 99–103 and 121–124; these read GTKID and TSPS. Aspartate 126 contacts substrate. Serine 130 contributes to the NAD(+) binding site. A substrate-binding site is contributed by aspartate 173. Zn(2+) is bound by residues aspartate 173 and histidine 253. A substrate-binding site is contributed by histidine 257. Position 269 (histidine 269) interacts with Zn(2+).

It belongs to the glycerol-1-phosphate dehydrogenase family. Zn(2+) serves as cofactor.

It is found in the cytoplasm. It catalyses the reaction sn-glycerol 1-phosphate + NAD(+) = dihydroxyacetone phosphate + NADH + H(+). The catalysed reaction is sn-glycerol 1-phosphate + NADP(+) = dihydroxyacetone phosphate + NADPH + H(+). It participates in membrane lipid metabolism; glycerophospholipid metabolism. In terms of biological role, catalyzes the NAD(P)H-dependent reduction of dihydroxyacetonephosphate (DHAP or glycerone phosphate) to glycerol 1-phosphate (G1P). The G1P thus generated is used as the glycerophosphate backbone of phospholipids in the cellular membranes of Archaea. This Thermoplasma volcanium (strain ATCC 51530 / DSM 4299 / JCM 9571 / NBRC 15438 / GSS1) protein is Glycerol-1-phosphate dehydrogenase [NAD(P)+].